We begin with the raw amino-acid sequence, 249 residues long: MAKTQCPLVFSLLALALIGTLQSSAAQCQNSNQFLGSLEITGKYRKAVVSIHNYYRNLTAAGEAGEYYKQPPAENMLQLTWDDDAASKAVELANTCVFGHDGAKDKDDKPMGQNIALKMSSTQSDVNKSYDEWMTGMVKDWFDEVKDYSFGSGFSSGTGHYTQIVWANTSKVGCGYSYYKEGTWYAGYLVCNYKPPGNWYGQDPYIQGNVNCEKHNLGRSKNYNNLCVTKRKKKNNKSGSTQRTNFQEK.

The signal sequence occupies residues Met1 to Ala26. One can recognise an SCP domain in the interval Ser50–Tyr193. 3 N-linked (GlcNAc...) asparagine glycosylation sites follow: Asn57, Asn127, and Asn168.

The protein belongs to the CRISP family. Venom allergen 5-like subfamily. As to quaternary structure, monomeric in solution. Cu(2+) is required as a cofactor. In terms of tissue distribution, saliva (at protein level). Salivary gland (at protein level).

The protein localises to the secreted. Its function is as follows. Antioxidant protein that scavenges superoxide radicals. Removes superoxide radicals produced by PMA-stimulated host neutrophils. Inhibits host platelet aggregation induced by low doses of collagen by interfering with the pro-aggregatory properties of reactive oxygen species on platelets. Binds to heparin and sulfated glycosaminoglycans. The polypeptide is Salivary antigen-5 (Dipetalogaster maximus (Blood-sucking bug)).